The sequence spans 108 residues: Peptidyl-prolyl cis-trans isomerase FKBP1C (108 aa).

In terms of domain architecture, PPIase FKBP-type spans 20–108 (SQTCVMHYTG…VFDVELLKLE (89 aa)).

The protein belongs to the FKBP-type PPIase family. FKBP1 subfamily.

It catalyses the reaction [protein]-peptidylproline (omega=180) = [protein]-peptidylproline (omega=0). Catalyzes the cis-trans isomerization of proline imidic peptide bonds in oligopeptides. The sequence is that of Peptidyl-prolyl cis-trans isomerase FKBP1C from Homo sapiens (Human).